We begin with the raw amino-acid sequence, 723 residues long: Catalase-peroxidase (723 aa).

Positions 98–226 form a cross-link, tryptophyl-tyrosyl-methioninium (Trp-Tyr) (with M-252); it reads WHSAGSYRVG…LAAVMMGLIY (129 aa). Residue His-99 is the Proton acceptor of the active site. Residues 226–252 constitute a cross-link (tryptophyl-tyrosyl-methioninium (Tyr-Met) (with W-98)); the sequence is YVNPEGVDGNPDPLKTAKDMRVTFARM. His-267 provides a ligand contact to heme b.

The protein belongs to the peroxidase family. Peroxidase/catalase subfamily. As to quaternary structure, homodimer or homotetramer. It depends on heme b as a cofactor. Formation of the three residue Trp-Tyr-Met cross-link is important for the catalase, but not the peroxidase activity of the enzyme.

It catalyses the reaction H2O2 + AH2 = A + 2 H2O. The catalysed reaction is 2 H2O2 = O2 + 2 H2O. Functionally, bifunctional enzyme with both catalase and broad-spectrum peroxidase activity. The chain is Catalase-peroxidase from Vibrio vulnificus (strain YJ016).